Reading from the N-terminus, the 177-residue chain is Large ribosomal subunit protein uL6 (177 aa).

It belongs to the universal ribosomal protein uL6 family. In terms of assembly, part of the 50S ribosomal subunit.

This protein binds to the 23S rRNA, and is important in its secondary structure. It is located near the subunit interface in the base of the L7/L12 stalk, and near the tRNA binding site of the peptidyltransferase center. This chain is Large ribosomal subunit protein uL6, found in Pectobacterium atrosepticum (strain SCRI 1043 / ATCC BAA-672) (Erwinia carotovora subsp. atroseptica).